The chain runs to 258 residues: MLLVMDMGNSHIHIGVFDGDRIVSQIRYATSSVDSTSDQMGVFLRQALRENSVDLGKIDGCGISSVVPHLNYSLGSAVIKYFNIKPFFISMDTTDLDMSAVEAHQVGADRIASCISAIADHPNKDLLIIDLGTATTFDLVTKDKKYLSGSIMPGVKLSLNALCQGASQLSSVTIVKPEVAIGYDTKTNIRSGLYYGHLGALKELKRRSVEEFGSPVYTIATGGFAGLFKEEDIFNEISPDLILRGIRIAFLENNKKGV.

6–13 is a binding site for ATP; sequence DMGNSHIH. 107-110 lines the substrate pocket; that stretch reads GADR. The active-site Proton acceptor is the Asp109. Asp130 lines the K(+) pocket. Thr133 serves as a coordination point for ATP. Thr185 provides a ligand contact to substrate.

It belongs to the type III pantothenate kinase family. Homodimer. The cofactor is NH4(+). K(+) serves as cofactor.

It is found in the cytoplasm. It catalyses the reaction (R)-pantothenate + ATP = (R)-4'-phosphopantothenate + ADP + H(+). It functions in the pathway cofactor biosynthesis; coenzyme A biosynthesis; CoA from (R)-pantothenate: step 1/5. Its function is as follows. Catalyzes the phosphorylation of pantothenate (Pan), the first step in CoA biosynthesis. The protein is Type III pantothenate kinase 1 of Francisella tularensis subsp. tularensis (strain FSC 198).